The following is a 434-amino-acid chain: Putative F-box/FBD/LRR-repeat protein At1g16940 (434 aa).

Residues 10-66 (HNIINQLPDSLLCEIFFNLPTEEVVKTSLICRRWRYVWQSLPGLDLVINGSKNYDKF) form the F-box domain. 6 LRR repeats span residues 72 to 99 (FMFL…MMNN), 114 to 141 (RRYV…KLHR), 164 to 189 (INFV…TMDK), 204 to 231 (CLTN…KLNR), 252 to 277 (DVAY…TISF), and 306 to 331 (MAVG…VMGF). Residues 336-385 (WGINFSDVPQCVLSSLEFVEVKAREVADMKKLWSYFMENSTVLKKFTLCL) form the FBD domain.

The sequence is that of Putative F-box/FBD/LRR-repeat protein At1g16940 from Arabidopsis thaliana (Mouse-ear cress).